The chain runs to 341 residues: HTH-type transcriptional repressor PurR (341 aa).

The 55-residue stretch at 2 to 56 (ATIKDVAKRANVSTTTVSHVINKTRFVAEETRNAVWAAIKELHYSPSAVARSLKV) folds into the HTH lacI-type domain. Positions 4 to 23 (IKDVAKRANVSTTTVSHVIN) form a DNA-binding region, H-T-H motif. Residues 48 to 56 (SAVARSLKV) mediate DNA binding. Hypoxanthine contacts are provided by Tyr-73, Arg-190, Thr-192, Phe-221, and Asp-275.

In terms of assembly, homodimer.

It functions in the pathway purine metabolism; purine nucleotide biosynthesis [regulation]. Functionally, is the main repressor of the genes involved in the de novo synthesis of purine nucleotides, regulating purB, purC, purEK, purF, purHD, purL, purMN and guaBA expression. PurR is allosterically activated to bind its cognate DNA by binding the purine corepressors, hypoxanthine or guanine, thereby effecting transcription repression. The protein is HTH-type transcriptional repressor PurR of Escherichia fergusonii (strain ATCC 35469 / DSM 13698 / CCUG 18766 / IAM 14443 / JCM 21226 / LMG 7866 / NBRC 102419 / NCTC 12128 / CDC 0568-73).